A 177-amino-acid polypeptide reads, in one-letter code: ATP synthase subunit delta 1 (177 aa).

The protein belongs to the ATPase delta chain family. In terms of assembly, F-type ATPases have 2 components, F(1) - the catalytic core - and F(0) - the membrane proton channel. F(1) has five subunits: alpha(3), beta(3), gamma(1), delta(1), epsilon(1). F(0) has three main subunits: a(1), b(2) and c(10-14). The alpha and beta chains form an alternating ring which encloses part of the gamma chain. F(1) is attached to F(0) by a central stalk formed by the gamma and epsilon chains, while a peripheral stalk is formed by the delta and b chains.

Its subcellular location is the cell inner membrane. Its function is as follows. F(1)F(0) ATP synthase produces ATP from ADP in the presence of a proton or sodium gradient. F-type ATPases consist of two structural domains, F(1) containing the extramembraneous catalytic core and F(0) containing the membrane proton channel, linked together by a central stalk and a peripheral stalk. During catalysis, ATP synthesis in the catalytic domain of F(1) is coupled via a rotary mechanism of the central stalk subunits to proton translocation. This protein is part of the stalk that links CF(0) to CF(1). It either transmits conformational changes from CF(0) to CF(1) or is implicated in proton conduction. The sequence is that of ATP synthase subunit delta 1 from Photobacterium profundum (strain SS9).